Here is a 452-residue protein sequence, read N- to C-terminus: Mitochondrial distribution and morphology protein 10 (452 aa).

It belongs to the MDM10 family. As to quaternary structure, component of the ER-mitochondria encounter structure (ERMES) or MDM complex, composed of MMM1, MDM10, MDM12 and MDM34. Associates with the mitochondrial outer membrane sorting assembly machinery SAM(core) complex.

It localises to the mitochondrion outer membrane. In terms of biological role, component of the ERMES/MDM complex, which serves as a molecular tether to connect the endoplasmic reticulum and mitochondria. Components of this complex are involved in the control of mitochondrial shape and protein biogenesis and may function in phospholipid exchange. MDM10 is involved in the late assembly steps of the general translocase of the mitochondrial outer membrane (TOM complex). Functions in the TOM40-specific route of the assembly of outer membrane beta-barrel proteins, including the association of TOM40 with the receptor TOM22 and small TOM proteins. Can associate with the SAM(core) complex as well as the MDM12-MMM1 complex, both involved in late steps of the major beta-barrel assembly pathway, that is responsible for biogenesis of all outer membrane beta-barrel proteins. May act as a switch that shuttles between both complexes and channels precursor proteins into the TOM40-specific pathway. Plays a role in mitochondrial morphology and in the inheritance of mitochondria. In Kluyveromyces lactis (strain ATCC 8585 / CBS 2359 / DSM 70799 / NBRC 1267 / NRRL Y-1140 / WM37) (Yeast), this protein is Mitochondrial distribution and morphology protein 10.